A 279-amino-acid chain; its full sequence is NH(3)-dependent NAD(+) synthetase (279 aa).

Position 46–53 (46–53 (GVSGGQDS)) interacts with ATP. A Mg(2+)-binding site is contributed by aspartate 52. Deamido-NAD(+) is bound at residue arginine 139. Threonine 159 serves as a coordination point for ATP. Glutamate 164 contacts Mg(2+). Deamido-NAD(+) is bound by residues lysine 172 and aspartate 179. ATP-binding residues include lysine 188 and threonine 210. 259-260 (HK) provides a ligand contact to deamido-NAD(+).

It belongs to the NAD synthetase family. Homodimer.

The catalysed reaction is deamido-NAD(+) + NH4(+) + ATP = AMP + diphosphate + NAD(+) + H(+). It participates in cofactor biosynthesis; NAD(+) biosynthesis; NAD(+) from deamido-NAD(+) (ammonia route): step 1/1. In terms of biological role, catalyzes the ATP-dependent amidation of deamido-NAD to form NAD. Uses ammonia as a nitrogen source. This is NH(3)-dependent NAD(+) synthetase from Leifsonia xyli subsp. xyli (strain CTCB07).